The primary structure comprises 150 residues: Deoxyuridine 5'-triphosphate nucleotidohydrolase (150 aa).

Substrate is bound by residues 70–72, Asn-82, 86–88, and Met-96; these read RSG and LID.

The protein belongs to the dUTPase family. It depends on Mg(2+) as a cofactor.

The enzyme catalyses dUTP + H2O = dUMP + diphosphate + H(+). Its pathway is pyrimidine metabolism; dUMP biosynthesis; dUMP from dCTP (dUTP route): step 2/2. In terms of biological role, this enzyme is involved in nucleotide metabolism: it produces dUMP, the immediate precursor of thymidine nucleotides and it decreases the intracellular concentration of dUTP so that uracil cannot be incorporated into DNA. This Baumannia cicadellinicola subsp. Homalodisca coagulata protein is Deoxyuridine 5'-triphosphate nucleotidohydrolase.